We begin with the raw amino-acid sequence, 291 residues long: Phosphatidylserine decarboxylase proenzyme (291 aa).

Active-site charge relay system; for autoendoproteolytic cleavage activity residues include aspartate 90, histidine 147, and serine 253. The active-site Schiff-base intermediate with substrate; via pyruvic acid; for decarboxylase activity is the serine 253. Serine 253 carries the pyruvic acid (Ser); by autocatalysis modification.

The protein belongs to the phosphatidylserine decarboxylase family. PSD-B subfamily. Prokaryotic type I sub-subfamily. Heterodimer of a large membrane-associated beta subunit and a small pyruvoyl-containing alpha subunit. Pyruvate is required as a cofactor. In terms of processing, is synthesized initially as an inactive proenzyme. Formation of the active enzyme involves a self-maturation process in which the active site pyruvoyl group is generated from an internal serine residue via an autocatalytic post-translational modification. Two non-identical subunits are generated from the proenzyme in this reaction, and the pyruvate is formed at the N-terminus of the alpha chain, which is derived from the carboxyl end of the proenzyme. The autoendoproteolytic cleavage occurs by a canonical serine protease mechanism, in which the side chain hydroxyl group of the serine supplies its oxygen atom to form the C-terminus of the beta chain, while the remainder of the serine residue undergoes an oxidative deamination to produce ammonia and the pyruvoyl prosthetic group on the alpha chain. During this reaction, the Ser that is part of the protease active site of the proenzyme becomes the pyruvoyl prosthetic group, which constitutes an essential element of the active site of the mature decarboxylase.

It is found in the cell membrane. The enzyme catalyses a 1,2-diacyl-sn-glycero-3-phospho-L-serine + H(+) = a 1,2-diacyl-sn-glycero-3-phosphoethanolamine + CO2. It participates in phospholipid metabolism; phosphatidylethanolamine biosynthesis; phosphatidylethanolamine from CDP-diacylglycerol: step 2/2. Functionally, catalyzes the formation of phosphatidylethanolamine (PtdEtn) from phosphatidylserine (PtdSer). This Photobacterium profundum (strain SS9) protein is Phosphatidylserine decarboxylase proenzyme.